The primary structure comprises 148 residues: Large ribosomal subunit protein uL15 (148 aa).

Basic and acidic residues predominate over residues 1 to 11 (MSEPIKLHDLR). The disordered stretch occupies residues 1 to 52 (MSEPIKLHDLRPAAGSNKAKTRVGRGEASKGKTAGRGTKGTKARKQVSAAFE).

It belongs to the universal ribosomal protein uL15 family. In terms of assembly, part of the 50S ribosomal subunit.

Its function is as follows. Binds to the 23S rRNA. The sequence is that of Large ribosomal subunit protein uL15 from Corynebacterium glutamicum (strain R).